Consider the following 249-residue polypeptide: Probable septum site-determining protein MinC (249 aa).

Positions 116–149 are disordered; it reads AAVSPPPPPPPPPARAEPAAPVARPAPGRMQRNA. The segment covering 119–130 has biased composition (pro residues); that stretch reads SPPPPPPPPPAR. A compositionally biased stretch (low complexity) spans 131–142; the sequence is AEPAAPVARPAP.

This sequence belongs to the MinC family. As to quaternary structure, interacts with MinD and FtsZ.

In terms of biological role, cell division inhibitor that blocks the formation of polar Z ring septums. Rapidly oscillates between the poles of the cell to destabilize FtsZ filaments that have formed before they mature into polar Z rings. Prevents FtsZ polymerization. The polypeptide is Probable septum site-determining protein MinC (Xanthomonas campestris pv. campestris (strain ATCC 33913 / DSM 3586 / NCPPB 528 / LMG 568 / P 25)).